Here is a 94-residue protein sequence, read N- to C-terminus: Small ribosomal subunit protein bS6 (94 aa).

It belongs to the bacterial ribosomal protein bS6 family.

Binds together with bS18 to 16S ribosomal RNA. The sequence is that of Small ribosomal subunit protein bS6 from Clostridium botulinum (strain Loch Maree / Type A3).